A 648-amino-acid polypeptide reads, in one-letter code: Transketolase (648 aa).

Residue His-22 coordinates substrate. Residues His-62 and 109-111 each bind thiamine diphosphate; that span reads GPL. Asp-150 contributes to the Mg(2+) binding site. Residues Gly-151 and Asn-180 each coordinate thiamine diphosphate. Mg(2+) contacts are provided by Asn-180 and Val-182. Residues His-252, Arg-345, and Ser-372 each coordinate substrate. Thiamine diphosphate is bound at residue His-252. Glu-397 serves as the catalytic Proton donor. Phe-423 contacts thiamine diphosphate. Substrate contacts are provided by His-447, Asp-455, and Arg-506.

This sequence belongs to the transketolase family. Homodimer. Requires Mg(2+) as cofactor. Ca(2+) is required as a cofactor. It depends on Mn(2+) as a cofactor. The cofactor is Co(2+). Thiamine diphosphate serves as cofactor.

The enzyme catalyses D-sedoheptulose 7-phosphate + D-glyceraldehyde 3-phosphate = aldehydo-D-ribose 5-phosphate + D-xylulose 5-phosphate. Functionally, catalyzes the transfer of a two-carbon ketol group from a ketose donor to an aldose acceptor, via a covalent intermediate with the cofactor thiamine pyrophosphate. The protein is Transketolase (tkt) of Mycoplasma pneumoniae (strain ATCC 29342 / M129 / Subtype 1) (Mycoplasmoides pneumoniae).